Reading from the N-terminus, the 104-residue chain is Protein Rev (104 aa).

Ser5 carries the post-translational modification Phosphoserine; by host CK2. The interval 18 to 26 is homomultimerization; that stretch reads VIKILYQSN. Residues 25-34 are compositionally biased toward polar residues; that stretch reads SNPYPNSKGT. Disordered regions lie at residues 25 to 48 and 63 to 104; these read SNPYPNSKGTRQARRNRRRRWRAR and CLGG…ATTE. The Nuclear localization signal and RNA-binding (RRE) motif lies at 34-50; it reads TRQARRNRRRRWRARQR. The span at 35–48 shows a compositional bias: basic residues; that stretch reads RQARRNRRRRWRAR. Positions 67 to 77 are enriched in pro residues; that stretch reads PPEPVDLPLPP. The short motif at 73-84 is the Nuclear export signal and binding to XPO1 element; the sequence is LPLPPLDRLTLD. Positions 91–104 are enriched in polar residues; it reads TPGTESQQGTATTE.

It belongs to the HIV-1 REV protein family. In terms of assembly, homomultimer; when bound to the RRE. Multimeric assembly is essential for activity and may involve XPO1. Binds to human KPNB1, XPO1, TNPO1, RANBP5 and IPO7. Interacts with the viral Integrase. Interacts with human KHDRBS1. Interacts with human NAP1; this interaction decreases Rev multimerization and stimulates its activity. Interacts with human DEAD-box helicases DDX3 and DDX24; these interactions may serve for viral RNA export to the cytoplasm and packaging, respectively. Interacts with human PSIP1; this interaction may inhibit HIV-1 DNA integration by promoting dissociation of the Integrase-LEDGF/p75 complex. Post-translationally, asymmetrically arginine dimethylated at one site by host PRMT6. Methylation impairs the RNA-binding activity and export of viral RNA from the nucleus to the cytoplasm. Phosphorylated by protein kinase CK2. Presence of, and maybe binding to the N-terminus of the regulatory beta subunit of CK2 is necessary for CK2-mediated Rev's phosphorylation.

The protein resides in the host nucleus. Its subcellular location is the host nucleolus. The protein localises to the host cytoplasm. Escorts unspliced or incompletely spliced viral pre-mRNAs (late transcripts) out of the nucleus of infected cells. These pre-mRNAs carry a recognition sequence called Rev responsive element (RRE) located in the env gene, that is not present in fully spliced viral mRNAs (early transcripts). This function is essential since most viral proteins are translated from unspliced or partially spliced pre-mRNAs which cannot exit the nucleus by the pathway used by fully processed cellular mRNAs. Rev itself is translated from a fully spliced mRNA that readily exits the nucleus. Rev's nuclear localization signal (NLS) binds directly to KPNB1/Importin beta-1 without previous binding to KPNA1/Importin alpha-1. KPNB1 binds to the GDP bound form of RAN (Ran-GDP) and targets Rev to the nucleus. In the nucleus, the conversion from Ran-GDP to Ran-GTP dissociates Rev from KPNB1 and allows Rev's binding to the RRE in viral pre-mRNAs. Rev multimerization on the RRE via cooperative assembly exposes its nuclear export signal (NES) to the surface. Rev can then form a complex with XPO1/CRM1 and Ran-GTP, leading to nuclear export of the complex. Conversion from Ran-GTP to Ran-GDP mediates dissociation of the Rev/RRE/XPO1/RAN complex, so that Rev can return to the nucleus for a subsequent round of export. Beside KPNB1, also seems to interact with TNPO1/Transportin-1, RANBP5/IPO5 and IPO7/RANBP7 for nuclear import. The nucleoporin-like HRB/RIP is an essential cofactor that probably indirectly interacts with Rev to release HIV RNAs from the perinuclear region to the cytoplasm. This Human immunodeficiency virus type 1 group N (isolate YBF30) (HIV-1) protein is Protein Rev.